The sequence spans 289 residues: ATP synthase gamma chain (289 aa).

Belongs to the ATPase gamma chain family. As to quaternary structure, F-type ATPases have 2 components, CF(1) - the catalytic core - and CF(0) - the membrane proton channel. CF(1) has five subunits: alpha(3), beta(3), gamma(1), delta(1), epsilon(1). CF(0) has three main subunits: a, b and c.

It is found in the cell inner membrane. Its function is as follows. Produces ATP from ADP in the presence of a proton gradient across the membrane. The gamma chain is believed to be important in regulating ATPase activity and the flow of protons through the CF(0) complex. This is ATP synthase gamma chain from Dichelobacter nodosus (strain VCS1703A).